Reading from the N-terminus, the 109-residue chain is Flowering-promoting factor 1-like protein 1 (109 aa).

Positions 73 to 81 (RGSLDLISL) match the D-box motif.

The protein belongs to the FPF1 family. In terms of assembly, interacts with RPT4. Post-translationally, ubiquitinated. RPT4 mediates its proteasome-dependent degradation. As to expression, specifically expressed in the apical meristem, the elongation zone of root tip, steles of the branch zone, and the young lateral root. Also expressed in spikes. Expressed in roots and spikes (at protein level).

It is found in the cytoplasm. The protein resides in the nucleus. In terms of biological role, GTP-binding protein that functions in the development of root systems, which are mediated by auxin. Acts as a cell cycle regulator during root development. Proteasome-mediated degradation of the protein is necessary for the transition of metaphase to anaphase in mitosis. The chain is Flowering-promoting factor 1-like protein 1 (RAA1) from Oryza sativa subsp. japonica (Rice).